The primary structure comprises 336 residues: Ketol-acid reductoisomerase (NADP(+)) (336 aa).

Positions 3–183 constitute a KARI N-terminal Rossmann domain; sequence AKMYYDRDVD…GCTKAGVLET (181 aa). Residues 26 to 29, Arg-49, Ser-52, Ser-54, and 84 to 87 contribute to the NADP(+) site; these read YGSQ and DEQQ. Residue His-109 is part of the active site. Gly-135 contacts NADP(+). A KARI C-terminal knotted domain is found at 184-329; it reads TFKEETETDL…KELRDQMPFI (146 aa). Mg(2+) is bound by residues Asp-192, Glu-196, Glu-228, and Glu-232. Residue Ser-253 participates in substrate binding.

Belongs to the ketol-acid reductoisomerase family. It depends on Mg(2+) as a cofactor.

It carries out the reaction (2R)-2,3-dihydroxy-3-methylbutanoate + NADP(+) = (2S)-2-acetolactate + NADPH + H(+). It catalyses the reaction (2R,3R)-2,3-dihydroxy-3-methylpentanoate + NADP(+) = (S)-2-ethyl-2-hydroxy-3-oxobutanoate + NADPH + H(+). The protein operates within amino-acid biosynthesis; L-isoleucine biosynthesis; L-isoleucine from 2-oxobutanoate: step 2/4. It functions in the pathway amino-acid biosynthesis; L-valine biosynthesis; L-valine from pyruvate: step 2/4. Involved in the biosynthesis of branched-chain amino acids (BCAA). Catalyzes an alkyl-migration followed by a ketol-acid reduction of (S)-2-acetolactate (S2AL) to yield (R)-2,3-dihydroxy-isovalerate. In the isomerase reaction, S2AL is rearranged via a Mg-dependent methyl migration to produce 3-hydroxy-3-methyl-2-ketobutyrate (HMKB). In the reductase reaction, this 2-ketoacid undergoes a metal-dependent reduction by NADPH to yield (R)-2,3-dihydroxy-isovalerate. The polypeptide is Ketol-acid reductoisomerase (NADP(+)) (Deinococcus radiodurans (strain ATCC 13939 / DSM 20539 / JCM 16871 / CCUG 27074 / LMG 4051 / NBRC 15346 / NCIMB 9279 / VKM B-1422 / R1)).